The following is a 1382-amino-acid chain: Hepatocyte growth factor receptor (1382 aa).

The N-terminal stretch at 1–24 is a signal peptide; sequence MKAPAVLAPGILVLLFTLVQKSYG. At 25 to 933 the chain is on the extracellular side; the sequence is ECREALVKSE…VIVQPDQNFT (909 aa). Positions 27–516 constitute a Sema domain; sequence REALVKSEMN…TGKKITKIPL (490 aa). Asparagine 45 is a glycosylation site (N-linked (GlcNAc...) asparagine). Intrachain disulfides connect cysteine 95-cysteine 101, cysteine 98-cysteine 160, cysteine 133-cysteine 141, and cysteine 173-cysteine 176. Asparagine 106 carries an N-linked (GlcNAc...) asparagine glycan. N-linked (GlcNAc...) asparagine glycans are attached at residues asparagine 203 and asparagine 359. Intrachain disulfides connect cysteine 299-cysteine 364 and cysteine 386-cysteine 398. N-linked (GlcNAc...) asparagine glycosylation is found at asparagine 400 and asparagine 406. Cystine bridges form between cysteine 521–cysteine 539, cysteine 527–cysteine 562, cysteine 530–cysteine 546, and cysteine 542–cysteine 552. IPT/TIG domains lie at 564 to 656, 658 to 740, and 743 to 837; these read PTIY…FSYV, PVIT…FSYQ, and PIVY…LIYV. A glycan (O-linked (Man) threonine) is linked at threonine 583. N-linked (GlcNAc...) asparagine glycans are attached at residues asparagine 608 and asparagine 636. Residues threonine 677 and threonine 762 are each glycosylated (O-linked (Man) threonine). Asparagine 786, asparagine 880, and asparagine 931 each carry an N-linked (GlcNAc...) asparagine glycan. A helical membrane pass occupies residues 934 to 956; it reads GLIVGVISISIILLLLLGVFLWL. Residues 957–1382 lie on the Cytoplasmic side of the membrane; that stretch reads KKRKQIKDLG…QDNIDGEGDT (426 aa). The residue at position 967 (serine 967) is a Phosphoserine. Threonine 978 is subject to Phosphothreonine. Phosphoserine is present on residues serine 991, serine 998, and serine 1001. Tyrosine 1004 carries the post-translational modification Phosphotyrosine. Residues 1079–1346 form the Protein kinase domain; that stretch reads VHFNEVIGRG…RISAIFSTFI (268 aa). Residues 1085–1093 and lysine 1111 each bind ATP; that span reads IGRGHFGCV. Catalysis depends on aspartate 1205, which acts as the Proton acceptor. The interaction with RANBP9 stretch occupies residues 1213–1382; sequence LDEKFTVKVA…QDNIDGEGDT (170 aa). Phosphotyrosine is present on tyrosine 1231. Residues tyrosine 1235 and tyrosine 1236 each carry the phosphotyrosine; by autocatalysis modification. Threonine 1290 is modified (phosphothreonine). The tract at residues 1321-1360 is interaction with MUC20; sequence WHPKAELRPSFSELVSRISAIFSTFIGEHYVHVNATYVNV. Phosphotyrosine; by autocatalysis occurs at positions 1350 and 1357. Tyrosine 1366 is subject to Phosphotyrosine.

The protein belongs to the protein kinase superfamily. Tyr protein kinase family. As to quaternary structure, heterodimer made of an alpha chain (50 kDa) and a beta chain (145 kDa) which are disulfide linked. Binds PLXNB1. Interacts when phosphorylated with downstream effectors including STAT3, PIK3R1, SRC, PCLG1, GRB2 and GAB1. Interacts with SPSB1, SPSB2 and SPSB4. Interacts with INPP5D/SHIP1. When phosphorylated at Tyr-1357, interacts with INPPL1/SHIP2. Interacts with RANBP9 and RANBP10, as well as SPSB1, SPSB2, SPSB3 and SPSB4. SPSB1 binding occurs in the presence and in the absence of HGF, however HGF treatment has a positive effect on this interaction. Interacts with MUC20; prevents interaction with GRB2 and suppresses hepatocyte growth factor-induced cell proliferation. Interacts with GRB10. Interacts with PTPN1 and PTPN2. Interacts with HSP90AA1 and HSP90AB1; the interaction suppresses MET kinase activity. Interacts with tensin TNS3. Interacts (when phosphorylated) with tensin TNS4 (via SH2 domain); the interaction increases MET protein stability by inhibiting MET endocytosis and subsequent lysosomal degradation. In terms of processing, autophosphorylated in response to ligand binding on Tyr-1235 and Tyr-1236 in the kinase domain leading to further phosphorylation of Tyr-1350 and Tyr-1357 in the C-terminal multifunctional docking site. Dephosphorylated by PTPRJ at Tyr-1350 and Tyr-1366. Dephosphorylated by PTPN1 and PTPN2. Ubiquitinated. Ubiquitination by CBL regulates the receptor stability and activity through proteasomal degradation. Post-translationally, O-mannosylation of IPT/TIG domains by TMEM260 is required for protein maturation. O-mannosylated residues are composed of single mannose glycans that are not elongated or modified.

Its subcellular location is the membrane. It catalyses the reaction L-tyrosyl-[protein] + ATP = O-phospho-L-tyrosyl-[protein] + ADP + H(+). Its activity is regulated as follows. In its inactive state, the C-terminal tail interacts with the catalytic domain and inhibits the kinase activity. Upon ligand binding, the C-terminal tail is displaced and becomes phosphorylated, thus increasing the kinase activity. Receptor tyrosine kinase that transduces signals from the extracellular matrix into the cytoplasm by binding to hepatocyte growth factor/HGF ligand. Regulates many physiological processes including proliferation, scattering, morphogenesis and survival. Ligand binding at the cell surface induces autophosphorylation of MET on its intracellular domain that provides docking sites for downstream signaling molecules. Following activation by ligand, interacts with the PI3-kinase subunit PIK3R1, PLCG1, SRC, GRB2, STAT3 or the adapter GAB1. Recruitment of these downstream effectors by MET leads to the activation of several signaling cascades including the RAS-ERK, PI3 kinase-AKT, or PLCgamma-PKC. The RAS-ERK activation is associated with the morphogenetic effects while PI3K/AKT coordinates prosurvival effects. During embryonic development, MET signaling plays a role in gastrulation, development and migration of muscles and neuronal precursors, angiogenesis and kidney formation. In adults, participates in wound healing as well as organ regeneration and tissue remodeling. Also promotes differentiation and proliferation of hematopoietic cells. This chain is Hepatocyte growth factor receptor (MET), found in Felis catus (Cat).